The sequence spans 79 residues: D-alanyl carrier protein (79 aa).

The region spanning 1–77 (MDIKAEVIEI…KIVEGVTELR (77 aa)) is the Carrier domain. S35 is subject to O-(pantetheine 4'-phosphoryl)serine.

It belongs to the DltC family. 4'-phosphopantetheine is transferred from CoA to a specific serine of apo-DCP.

The protein localises to the cytoplasm. Its pathway is cell wall biogenesis; lipoteichoic acid biosynthesis. Its function is as follows. Carrier protein involved in the D-alanylation of lipoteichoic acid (LTA). The loading of thioester-linked D-alanine onto DltC is catalyzed by D-alanine--D-alanyl carrier protein ligase DltA. The DltC-carried D-alanyl group is further transferred to cell membrane phosphatidylglycerol (PG) by forming an ester bond, probably catalyzed by DltD. D-alanylation of LTA plays an important role in modulating the properties of the cell wall in Gram-positive bacteria, influencing the net charge of the cell wall. The polypeptide is D-alanyl carrier protein (Streptococcus sanguinis (strain SK36)).